The following is a 167-amino-acid chain: Bacterial non-heme ferritin (167 aa).

Residues 1 to 145 (MLSKDIIKLL…DILDKIELIG (145 aa)) enclose the Ferritin-like diiron domain. Residues glutamate 17, glutamate 50, histidine 53, glutamate 94, and glutamine 127 each contribute to the Fe cation site.

The protein belongs to the ferritin family. Prokaryotic subfamily. In terms of assembly, homooligomer of 24 subunits that assemble into a spherical protein shell (12 +/- 1 nM diameter) that can sequester at least 2000 iron atoms.

Its subcellular location is the cytoplasm. It carries out the reaction 4 Fe(2+) + O2 + 6 H2O = 4 iron(III) oxide-hydroxide + 12 H(+). In terms of biological role, iron-storage protein. This is Bacterial non-heme ferritin (ftnA) from Helicobacter pylori (strain ATCC 700392 / 26695) (Campylobacter pylori).